A 188-amino-acid polypeptide reads, in one-letter code: Peroxynitrite isomerase (188 aa).

The GXWXGXG motif lies at 35–41; that stretch reads GTWRGEG. His-178 contributes to the heme b binding site.

Belongs to the nitrobindin family. As to quaternary structure, homodimer. Requires heme b as cofactor.

The enzyme catalyses peroxynitrite = nitrate. It functions in the pathway nitrogen metabolism. Heme-binding protein able to scavenge peroxynitrite and to protect free L-tyrosine against peroxynitrite-mediated nitration, by acting as a peroxynitrite isomerase that converts peroxynitrite to nitrate. Therefore, this protein likely plays a role in peroxynitrite sensing and in the detoxification of reactive nitrogen and oxygen species (RNS and ROS, respectively). Is able to bind nitric oxide (NO) in vitro, but may act as a sensor of peroxynitrite levels in vivo. The protein is Peroxynitrite isomerase of Frankia casuarinae (strain DSM 45818 / CECT 9043 / HFP020203 / CcI3).